The following is a 454-amino-acid chain: uncharacterized protein (454 aa).

[4Fe-4S] cluster contacts are provided by cysteine 73, cysteine 79, cysteine 82, and cysteine 154. Residues glutamine 279, phenylalanine 307, aspartate 328, and aspartate 381 each coordinate S-adenosyl-L-methionine. Cysteine 408 functions as the Nucleophile in the catalytic mechanism.

It belongs to the class I-like SAM-binding methyltransferase superfamily. RNA M5U methyltransferase family.

This is an uncharacterized protein from Leptospira interrogans serogroup Icterohaemorrhagiae serovar copenhageni (strain Fiocruz L1-130).